The sequence spans 286 residues: Homoserine kinase (286 aa).

78-88 (PLARGLGSSSS) is a binding site for ATP.

This sequence belongs to the GHMP kinase family. Homoserine kinase subfamily.

It localises to the cytoplasm. The enzyme catalyses L-homoserine + ATP = O-phospho-L-homoserine + ADP + H(+). It participates in amino-acid biosynthesis; L-threonine biosynthesis; L-threonine from L-aspartate: step 4/5. Functionally, catalyzes the ATP-dependent phosphorylation of L-homoserine to L-homoserine phosphate. This Streptococcus suis (strain 98HAH33) protein is Homoserine kinase.